We begin with the raw amino-acid sequence, 596 residues long: uncharacterized protein (596 aa).

The N-terminal stretch at 1-20 (MRYKPLLLALMLVFSTPAVA) is a signal peptide. 2 stretches are compositionally biased toward basic and acidic residues: residues 25 to 90 (AHNR…KEAT) and 161 to 184 (VRSD…NAKT). Positions 25-184 (AHNRSAEVKK…KYREEKNAKT (160 aa)) are disordered. Coiled coils occupy residues 177-281 (REEK…RFVS) and 318-454 (NREV…TAED).

Belongs to the peptidase M23B family.

This is an uncharacterized protein from Neisseria meningitidis serogroup B (strain ATCC BAA-335 / MC58).